Consider the following 176-residue polypeptide: Ribosome maturation factor RimM (176 aa).

One can recognise a PRC barrel domain in the interval 97–176 (EDDFYWRDLI…QICVDWDPGF (80 aa)).

It belongs to the RimM family. As to quaternary structure, binds ribosomal protein uS19.

Its subcellular location is the cytoplasm. Functionally, an accessory protein needed during the final step in the assembly of 30S ribosomal subunit, possibly for assembly of the head region. Essential for efficient processing of 16S rRNA. May be needed both before and after RbfA during the maturation of 16S rRNA. It has affinity for free ribosomal 30S subunits but not for 70S ribosomes. The protein is Ribosome maturation factor RimM of Colwellia psychrerythraea (strain 34H / ATCC BAA-681) (Vibrio psychroerythus).